We begin with the raw amino-acid sequence, 154 residues long: Myoglobin (154 aa).

The 147-residue stretch at 2 to 148 (GLSDGEWQLV…FRNDMAAKYK (147 aa)) folds into the Globin domain. Residue S4 is modified to Phosphoserine. H65 serves as a coordination point for nitrite. Position 65 (H65) interacts with O2. Position 68 is a phosphothreonine (T68). H94 is a heme b binding site.

Belongs to the globin family. Monomeric.

It localises to the cytoplasm. The protein resides in the sarcoplasm. It carries out the reaction Fe(III)-heme b-[protein] + nitric oxide + H2O = Fe(II)-heme b-[protein] + nitrite + 2 H(+). The enzyme catalyses H2O2 + AH2 = A + 2 H2O. Monomeric heme protein which primary function is to store oxygen and facilitate its diffusion within muscle tissues. Reversibly binds oxygen through a pentacoordinated heme iron and enables its timely and efficient release as needed during periods of heightened demand. Depending on the oxidative conditions of tissues and cells, and in addition to its ability to bind oxygen, it also has a nitrite reductase activity whereby it regulates the production of bioactive nitric oxide. Under stress conditions, like hypoxia and anoxia, it also protects cells against reactive oxygen species thanks to its pseudoperoxidase activity. The chain is Myoglobin (MB) from Didelphis virginiana (North American opossum).